Reading from the N-terminus, the 388-residue chain is Na(+)/H(+) antiporter NhaA (388 aa).

Residues 1–11 (MKHLHRFFSSD) lie on the Cytoplasmic side of the membrane. Residues 12–31 (ASGGIILIIAAILAMIMANS) traverse the membrane as a helical segment. Residues 32 to 58 (GATSGWYHDFLETPVQLRVGSLEINKN) are Periplasmic-facing. The important for dimerization stretch occupies residues 45-58 (PVQLRVGSLEINKN). Residues 59–80 (MLLWINDALMAVFFLLVGLEVK) form a helical membrane-spanning segment. Over 81 to 96 (RELMQGSLASLRQAAF) the chain is Cytoplasmic. A helical transmembrane segment spans residues 97 to 116 (PVIAAIGGMIVPALLYLAFN). Residues 117–122 (YADPIT) lie on the Periplasmic side of the membrane. Residues 123–130 (REGWAIPA) form a helical membrane-spanning segment. Residues 131–154 (ATDIAFALGVLALLGSRVPLALKI) lie on the Cytoplasmic side of the membrane. The helical transmembrane segment at 155–176 (FLMALAIIDDLGAIIIIALFYT) threads the bilayer. Topologically, residues 177–180 (NDLS) are periplasmic. Residues 181–200 (MASLGVAAVAIAVLAVLNLC) form a helical membrane-spanning segment. Over 201–204 (GARR) the chain is Cytoplasmic. A helical transmembrane segment spans residues 205–222 (TGVYILVGVVLWTAVLKS). Residue glycine 223 is a topological domain, periplasmic. Residues 224–236 (VHATLAGVIVGFF) form a helical membrane-spanning segment. The Cytoplasmic segment spans residues 237–253 (IPLKEKHGRSPAKRLEH). The chain crosses the membrane as a helical span at residues 254-272 (VLHPWVAYLILPLFAFANA). Over 273–286 (GVSLQGVTLDGLTS) the chain is Periplasmic. The helical transmembrane segment at 287–310 (ILPLGIIAGLLIGKPLGISLFCWL) threads the bilayer. At 311-339 (ALRLKLAHLPEGTTYQQIMVVGILCGIGF) the chain is on the cytoplasmic side. Residues 340–350 (TMSIFIASLAF) traverse the membrane as a helical segment. Residues 351–357 (GSVDPEL) lie on the Periplasmic side of the membrane. A helical transmembrane segment spans residues 358–380 (INWAKLGILVGSISSAVIGYSWL). At 381 to 388 (RVRLRPSV) the chain is on the cytoplasmic side.

It belongs to the NhaA Na(+)/H(+) (TC 2.A.33) antiporter family. Monomer. Homodimer. Under routine stress conditions, the monomeric form is fully functional. However, the dimeric form is much more efficient in conferring growth resistance under extreme stress conditions.

It is found in the cell inner membrane. It carries out the reaction Na(+)(in) + 2 H(+)(out) = Na(+)(out) + 2 H(+)(in). It catalyses the reaction Li(+)(in) + 2 H(+)(out) = Li(+)(out) + 2 H(+)(in). With respect to regulation, activity is regulated by pH. Active at alkaline pH. Activity is strongly down-regulated below pH 6.5 and a dramatic increase in activity is observed upon increase of the pH from 6.5 to 8.5. Functionally, na(+)/H(+) antiporter that extrudes sodium in exchange for external protons. Plays an important role in the regulation of intracellular pH, cellular Na(+) content and cell volume. Catalyzes the exchange of 2 H(+) per Na(+). This stoichiometry applies at both neutral and alkaline pH values. In addition, can also transport lithium and is involved in lithium detoxification. Binding of the Li(+) and H(+) ligands to NhaA is coupled and antagonistic. The sequence is that of Na(+)/H(+) antiporter NhaA from Escherichia coli (strain K12).